Consider the following 216-residue polypeptide: Adenylate kinase (216 aa).

G10–T15 contributes to the ATP binding site. An NMP region spans residues S30–V59. AMP contacts are provided by residues T31, R36, G57–V59, G85–R88, and Q92. The tract at residues G122 to D159 is LID. ATP is bound by residues R123 and V132–Y133. AMP is bound by residues R156 and R167. G202 is an ATP binding site.

It belongs to the adenylate kinase family. In terms of assembly, monomer.

It localises to the cytoplasm. It catalyses the reaction AMP + ATP = 2 ADP. The protein operates within purine metabolism; AMP biosynthesis via salvage pathway; AMP from ADP: step 1/1. Catalyzes the reversible transfer of the terminal phosphate group between ATP and AMP. Plays an important role in cellular energy homeostasis and in adenine nucleotide metabolism. This Pseudomonas fluorescens (strain Pf0-1) protein is Adenylate kinase.